A 1202-amino-acid chain; its full sequence is DNA polymerase beta (1202 aa).

3 tandem repeats follow at residues 1071–1074 (AGNP), 1075–1078 (AGNP), and 1079–1082 (AGNA). Positions 1071-1082 (AGNPAGNPAGNA) are 3 X 4 AA tandem repeats of A-G-[NK]-[PA].

Belongs to the DNA polymerase type-B family.

It carries out the reaction DNA(n) + a 2'-deoxyribonucleoside 5'-triphosphate = DNA(n+1) + diphosphate. Functionally, DNA-directed DNA polymerase involved in viral DNA replication. The protein is DNA polymerase beta (DPOL) of Ornithodoros (relapsing fever ticks).